A 628-amino-acid polypeptide reads, in one-letter code: DNA ligase (628 aa).

Residues 36–40 (DVEYD), 85–86 (SL), and Glu117 each bind NAD(+). Catalysis depends on Lys119, which acts as the N6-AMP-lysine intermediate. Positions 140, 174, 309, and 333 each coordinate NAD(+). Zn(2+) is bound by residues Cys427, Cys430, Cys446, and Cys452.

This sequence belongs to the NAD-dependent DNA ligase family. LigA subfamily. Requires Mg(2+) as cofactor. The cofactor is Mn(2+).

The enzyme catalyses NAD(+) + (deoxyribonucleotide)n-3'-hydroxyl + 5'-phospho-(deoxyribonucleotide)m = (deoxyribonucleotide)n+m + AMP + beta-nicotinamide D-nucleotide.. In terms of biological role, DNA ligase that catalyzes the formation of phosphodiester linkages between 5'-phosphoryl and 3'-hydroxyl groups in double-stranded DNA using NAD as a coenzyme and as the energy source for the reaction. It is essential for DNA replication and repair of damaged DNA. This is DNA ligase from Tropheryma whipplei (strain Twist) (Whipple's bacillus).